A 183-amino-acid polypeptide reads, in one-letter code: Adenine phosphoribosyltransferase 3 (183 aa).

This sequence belongs to the purine/pyrimidine phosphoribosyltransferase family. Homodimer.

The protein resides in the cytoplasm. It catalyses the reaction AMP + diphosphate = 5-phospho-alpha-D-ribose 1-diphosphate + adenine. It participates in purine metabolism; AMP biosynthesis via salvage pathway; AMP from adenine: step 1/1. Catalyzes a salvage reaction resulting in the formation of AMP, that is energically less costly than de novo synthesis. May contribute to the recycling of adenine into adenylate nucleotides and the inactivation of cytokinins by phosphoribosylation. Possesses low activity toward adenine and cytokinins. This is Adenine phosphoribosyltransferase 3 (APT3) from Arabidopsis thaliana (Mouse-ear cress).